A 162-amino-acid polypeptide reads, in one-letter code: Phosphopantetheine adenylyltransferase (162 aa).

Substrate is bound at residue Thr10. ATP-binding positions include 10-11 (TF) and His18. Substrate contacts are provided by Lys42, Met74, and Arg88. ATP contacts are provided by residues 89–91 (GLR), Glu99, and 124–130 (YAFLSST).

Belongs to the bacterial CoaD family. In terms of assembly, homohexamer. Mg(2+) is required as a cofactor.

The protein localises to the cytoplasm. It carries out the reaction (R)-4'-phosphopantetheine + ATP + H(+) = 3'-dephospho-CoA + diphosphate. The protein operates within cofactor biosynthesis; coenzyme A biosynthesis; CoA from (R)-pantothenate: step 4/5. In terms of biological role, reversibly transfers an adenylyl group from ATP to 4'-phosphopantetheine, yielding dephospho-CoA (dPCoA) and pyrophosphate. This Aliivibrio fischeri (strain ATCC 700601 / ES114) (Vibrio fischeri) protein is Phosphopantetheine adenylyltransferase.